The primary structure comprises 73 residues: MQNKETLEQRIAELEMKTTFQEKLLDELNQVIVEQQFAIDKIHVQLRYLVNKFKDMQPSNIASQAEETPPPHY.

It belongs to the SlyX family.

The chain is Protein SlyX homolog from Pasteurella multocida (strain Pm70).